A 286-amino-acid polypeptide reads, in one-letter code: Probable alpha-ketoglutarate-dependent hypophosphite dioxygenase (286 aa).

Belongs to the PhyH family.

In terms of biological role, required for hypophosphite oxidation. The sequence is that of Probable alpha-ketoglutarate-dependent hypophosphite dioxygenase (htxA) from Stutzerimonas stutzeri (Pseudomonas stutzeri).